The primary structure comprises 298 residues: tRNA dimethylallyltransferase (298 aa).

10–17 (GPTASGKT) lines the ATP pocket. 12–17 (TASGKT) contributes to the substrate binding site. Positions 35–38 (DSMC) are interaction with substrate tRNA.

It belongs to the IPP transferase family. Monomer. Mg(2+) is required as a cofactor.

The enzyme catalyses adenosine(37) in tRNA + dimethylallyl diphosphate = N(6)-dimethylallyladenosine(37) in tRNA + diphosphate. Functionally, catalyzes the transfer of a dimethylallyl group onto the adenine at position 37 in tRNAs that read codons beginning with uridine, leading to the formation of N6-(dimethylallyl)adenosine (i(6)A). The sequence is that of tRNA dimethylallyltransferase from Hydrogenobaculum sp. (strain Y04AAS1).